The primary structure comprises 226 residues: Tyramine N-feruloyltransferase 4/11 (226 aa).

The important in binding site and for catalytic activity stretch occupies residues 29-45; sequence HIYKLFYQIHEYHNYTH. An N-acetyltransferase domain is found at 72-222; sequence VLLLEVSPTP…VGDALQKYAD (151 aa).

This sequence belongs to the acetyltransferase family. In terms of assembly, homodimer.

It localises to the cytoplasm. The enzyme catalyses tyramine + (E)-feruloyl-CoA = N-[(E)-feruloyl]tyramine + CoA + H(+). Inhibited by (2-hydroxyphenyl)amino sulfinyl acetic acid 1,1-dimethylethyl ester, by DEPC and by N-ethylmaleimide. Functionally, synthesizes amides which are involved in stress response in the cell wall. Catalyzes the synthesis of hydroxycinnamic acid amides from hydroxycinnamoyl-CoA thioesters and various hydroxyphenylethylamines such as 4-coumaroyl-CoA and sinapoyl-CoA. The protein is Tyramine N-feruloyltransferase 4/11 (THT4) of Nicotiana tabacum (Common tobacco).